The chain runs to 200 residues: Ribonuclease T2 (200 aa).

Cys17 and Cys22 are oxidised to a cystine. The active site involves His32. Cys42 and Cys89 are joined by a disulfide. N-linked (GlcNAc...) asparagine glycosylation is found at Asn43 and Asn73. Active-site residues include Glu82 and His86. An N-linked (GlcNAc...) asparagine glycan is attached at Asn116. 2 disulfides stabilise this stretch: Cys152/Cys188 and Cys170/Cys180.

The protein belongs to the RNase T2 family.

The protein resides in the secreted. The protein localises to the lysosome lumen. Its subcellular location is the endoplasmic reticulum lumen. It localises to the mitochondrion intermembrane space. The enzyme catalyses a ribonucleotidyl-ribonucleotide-RNA + H2O = a 3'-end 3'-phospho-ribonucleotide-RNA + a 5'-end dephospho-ribonucleoside-RNA + H(+). It carries out the reaction an adenylyl-uridine-RNA = a 3'-end 2',3'-cyclophospho-AMP-RNA + a 5'-end dephospho-uridine-RNA. It catalyses the reaction a guanylyl-uridine-RNA = a 3'-end 2',3'-cyclophospho-GMP-RNA + a 5'-end dephospho-uridine-RNA. With respect to regulation, inhibited by Zn(2+) and Cu(2+). In terms of biological role, ribonuclease that plays an essential role in innate immune response by recognizing and degrading RNAs from microbial pathogens that are subsequently sensed by TLR8. Cleaves preferentially single-stranded RNA molecules between purine and uridine residues, which critically contributes to the supply of catabolic uridine and the generation of purine-2',3'-cyclophosphate-terminated oligoribonucleotides. In turn, RNase T2 degradation products promote the RNA-dependent activation of TLR8. In plasmacytoid dendritic cells, it cooperates with PLD3 or PLD4 5'-&gt;3' exonucleases to process RNA fragments and release 2',3'-cyclic guanosine monophosphate (2',3'-cGMP), a potent stimulatory ligand for TLR7. Also plays a key role in degradation of mitochondrial RNA and processing of non-coding RNA imported from the cytosol into mitochondria. Participates as well in degradation of mitochondrion-associated cytosolic rRNAs. The sequence is that of Ribonuclease T2 (RNASET2) from Sus scrofa (Pig).